Consider the following 431-residue polypeptide: Mitochondrial distribution and morphology protein 12 (431 aa).

In terms of domain architecture, SMP-LTD spans 1–431 (MSIDLNWETL…VYPSFWTFLV (431 aa)). Disordered regions lie at residues 68–153 (DFYE…GVST) and 209–289 (QSHT…PKPE). Residues 69 to 96 (FYEDLDDDDGGSDEDDEGSNSCQTDEEN) show a composition bias toward acidic residues. A compositionally biased stretch (basic and acidic residues) spans 97 to 113 (EAAKTLRERRKMDRVER). A compositionally biased stretch (polar residues) spans 115-129 (ANGSSNVSNPPSYTD). Residues 241 to 252 (SASTLAVSSSTT) show a composition bias toward low complexity.

The protein belongs to the MDM12 family. In terms of assembly, component of the ER-mitochondria encounter structure (ERMES) or MDM complex, composed of mmm1, mdm10, mdm12 and mdm34. A mmm1 homodimer associates with one molecule of mdm12 on each side in a pairwise head-to-tail manner, and the SMP-LTD domains of mmm1 and mdm12 generate a continuous hydrophobic tunnel for phospholipid trafficking.

It localises to the mitochondrion outer membrane. Its subcellular location is the endoplasmic reticulum membrane. Its function is as follows. Component of the ERMES/MDM complex, which serves as a molecular tether to connect the endoplasmic reticulum (ER) and mitochondria. Components of this complex are involved in the control of mitochondrial shape and protein biogenesis, and function in nonvesicular lipid trafficking between the ER and mitochondria. Mdm12 is required for the interaction of the ER-resident membrane protein mmm1 and the outer mitochondrial membrane-resident beta-barrel protein mdm10. The mdm12-mmm1 subcomplex functions in the major beta-barrel assembly pathway that is responsible for biogenesis of all mitochondrial outer membrane beta-barrel proteins, and acts in a late step after the SAM complex. The mdm10-mdm12-mmm1 subcomplex further acts in the TOM40-specific pathway after the action of the mdm12-mmm1 complex. Essential for establishing and maintaining the structure of mitochondria and maintenance of mtDNA nucleoids. This Sclerotinia sclerotiorum (strain ATCC 18683 / 1980 / Ss-1) (White mold) protein is Mitochondrial distribution and morphology protein 12.